The sequence spans 303 residues: Movement protein (303 aa).

It belongs to the tobamovirus movement protein family.

It localises to the host cytoplasm. Its subcellular location is the host cytoskeleton. It is found in the host cell junction. The protein localises to the host plasmodesma. Transports viral genome to neighboring plant cells directly through plasmosdesmata, without any budding. The movement protein allows efficient cell to cell propagation, by bypassing the host cell wall barrier. Forms a ribonucleoprotein complex with viral RNA. Binds microtubules and modulates microtubule stability. Can bind double-stranded DNA. This Cymbidium (ORSV) protein is Movement protein (MP).